The chain runs to 432 residues: MLNLKTSAALFERAKKVIPGGVNSPVRAFNSVGGTPVFVTKGEGARMIDVDGNSYIDYVGSWGPFILGHSHPRVIEAIERTMKAHGTSFGAPTELEIELAELIIKVVPSVEMVRMVNSGTEATMSAIRLARGYTKREKIIKFEGCYHGHGDSFLIKAGSGALTLGAPSSPGVTEGTAKDTLNATYNDIESVRALVDSNKGNVAAIIIEAVGGNMGVVPSKKEFLVALRELCDKEGIVLIFDEVMTGFRVALGGAQEVYGITPDLTTMGKIIGGGLPVGAYGGKKEIMEHVSPVGTVYQAGTLSGNPLAMSAGLATIKILAEENPYPELEKKAVIIEEGFKSNLEKLGLNLCQTRVGSMSCLFFTDKEVVDFETANSSDTAKFATYFNSMLESGIYLACSQFEAMFISTMHTEEDLQKTIEANYNALKLAYGK.

N6-(pyridoxal phosphate)lysine is present on K269.

The protein belongs to the class-III pyridoxal-phosphate-dependent aminotransferase family. HemL subfamily. Homodimer. The cofactor is pyridoxal 5'-phosphate.

The protein localises to the cytoplasm. It catalyses the reaction (S)-4-amino-5-oxopentanoate = 5-aminolevulinate. The protein operates within porphyrin-containing compound metabolism; protoporphyrin-IX biosynthesis; 5-aminolevulinate from L-glutamyl-tRNA(Glu): step 2/2. It functions in the pathway porphyrin-containing compound metabolism; chlorophyll biosynthesis. This is Glutamate-1-semialdehyde 2,1-aminomutase from Chloroherpeton thalassium (strain ATCC 35110 / GB-78).